Reading from the N-terminus, the 121-residue chain is SLWEWGQMILKETGKNPFPYYGAYGCYCGWGGRRKPKDATDRCCFVHDCCRYKKLTGCPKTNDRYSYSRLDYTIVCGEDDPCKEICECDKAAAVCFRENLRTYNKKYMAHLRVLCKKDKPC.

Y27, G29, and G31 together coordinate Ca(2+). Disulfide bonds link C28/C44, C43/C95, C49/C121, C50/C88, C58/C82, and C76/C86. The active site involves H47. D48 lines the Ca(2+) pocket. D89 is an active-site residue.

This sequence belongs to the phospholipase A2 family. Group II subfamily. D49 sub-subfamily. Homodimer; non-covalently linked. Requires Ca(2+) as cofactor. Expressed by the venom gland.

It is found in the secreted. The catalysed reaction is a 1,2-diacyl-sn-glycero-3-phosphocholine + H2O = a 1-acyl-sn-glycero-3-phosphocholine + a fatty acid + H(+). Snake venom phospholipase A2 (PLA2) that exhibits myotoxin and anticoagulant activity. Displays edema-inducing activities in mouse paw. Also displays cytotoxic activity against some cell lines and myotubes, and antimicrobial activities against E.coli, C.albicans and Leishmania. PLA2 catalyzes the calcium-dependent hydrolysis of the 2-acyl groups in 3-sn-phosphoglycerides. The polypeptide is Basic phospholipase A2 BbTX-III (Bothrops brazili (Brazil's lancehead)).